We begin with the raw amino-acid sequence, 210 residues long: Large ribosomal subunit protein bL25 (210 aa).

The disordered stretch occupies residues 185-210 (APEPAGQPEVPPEPAEEAKAKTIEKE). A compositionally biased stretch (basic and acidic residues) spans 200–210 (EEAKAKTIEKE).

This sequence belongs to the bacterial ribosomal protein bL25 family. CTC subfamily. In terms of assembly, part of the 50S ribosomal subunit; part of the 5S rRNA/L5/L18/L25 subcomplex. Contacts the 5S rRNA. Binds to the 5S rRNA independently of L5 and L18.

In terms of biological role, this is one of the proteins that binds to the 5S RNA in the ribosome where it forms part of the central protuberance. This is Large ribosomal subunit protein bL25 from Desulforamulus reducens (strain ATCC BAA-1160 / DSM 100696 / MI-1) (Desulfotomaculum reducens).